The sequence spans 149 residues: UPF0260 protein PSPPH_1551 (149 aa).

It belongs to the UPF0260 family.

This Pseudomonas savastanoi pv. phaseolicola (strain 1448A / Race 6) (Pseudomonas syringae pv. phaseolicola (strain 1448A / Race 6)) protein is UPF0260 protein PSPPH_1551.